Reading from the N-terminus, the 545-residue chain is CTP synthase (545 aa).

Residues 1–266 (MTTKYIFVTG…DEICVKRFGL (266 aa)) are amidoligase domain. Residue S14 coordinates CTP. A UTP-binding site is contributed by S14. Residues 15–20 (SLGKGI) and D72 each bind ATP. Residues D72 and E140 each coordinate Mg(2+). Residues 147–149 (DIE), 187–192 (KTKPTQ), and K223 contribute to the CTP site. UTP-binding positions include 187–192 (KTKPTQ) and K223. ATP is bound at residue 239–241 (RDV). The 252-residue stretch at 291–542 (IIGMVGKYTE…IKSAIDHQQG (252 aa)) folds into the Glutamine amidotransferase type-1 domain. G352 is a binding site for L-glutamine. The Nucleophile; for glutamine hydrolysis role is filled by C379. L-glutamine-binding positions include 380–383 (LGMQ), E403, and R470. Residues H515 and E517 contribute to the active site.

The protein belongs to the CTP synthase family. Homotetramer.

The enzyme catalyses UTP + L-glutamine + ATP + H2O = CTP + L-glutamate + ADP + phosphate + 2 H(+). It carries out the reaction L-glutamine + H2O = L-glutamate + NH4(+). It catalyses the reaction UTP + NH4(+) + ATP = CTP + ADP + phosphate + 2 H(+). It participates in pyrimidine metabolism; CTP biosynthesis via de novo pathway; CTP from UDP: step 2/2. With respect to regulation, allosterically activated by GTP, when glutamine is the substrate; GTP has no effect on the reaction when ammonia is the substrate. The allosteric effector GTP functions by stabilizing the protein conformation that binds the tetrahedral intermediate(s) formed during glutamine hydrolysis. Inhibited by the product CTP, via allosteric rather than competitive inhibition. In terms of biological role, catalyzes the ATP-dependent amination of UTP to CTP with either L-glutamine or ammonia as the source of nitrogen. Regulates intracellular CTP levels through interactions with the four ribonucleotide triphosphates. The protein is CTP synthase of Psychromonas ingrahamii (strain DSM 17664 / CCUG 51855 / 37).